The primary structure comprises 328 residues: dITP/XTP pyrophosphatase (328 aa).

Positions 1-129 (MSEKIYEYKD…ATSEQGFGDI (129 aa)) are unknown. The NTP pyrophosphatase stretch occupies residues 130-324 (ILIATRNEGK…KLMEVFPAWQ (195 aa)). 134–139 (TRNEGK) lines the substrate pocket. The active-site Proton acceptor is the Asp-196. Asp-196 provides a ligand contact to Mg(2+). Substrate contacts are provided by residues Ser-197, 280-283 (FGYD), Lys-303, and 308-309 (HR).

The protein belongs to the HAM1 NTPase family. As to quaternary structure, homodimer. Mg(2+) serves as cofactor.

The catalysed reaction is XTP + H2O = XMP + diphosphate + H(+). The enzyme catalyses dITP + H2O = dIMP + diphosphate + H(+). It carries out the reaction ITP + H2O = IMP + diphosphate + H(+). Functionally, pyrophosphatase that catalyzes the hydrolysis of nucleoside triphosphates to their monophosphate derivatives, with a high preference for the non-canonical purine nucleotides XTP (xanthosine triphosphate), dITP (deoxyinosine triphosphate) and ITP. Seems to function as a house-cleaning enzyme that removes non-canonical purine nucleotides from the nucleotide pool, thus preventing their incorporation into DNA/RNA and avoiding chromosomal lesions. The polypeptide is dITP/XTP pyrophosphatase (Streptococcus pyogenes serotype M1).